Consider the following 206-residue polypeptide: Adenylate kinase (206 aa).

10–15 lines the ATP pocket; the sequence is GAGKGT. Residues 30–59 are NMP; it reads STGDMLRAAVAAGTPVGLKAKDIMASGGLV. Residues Thr-31, Arg-36, 57 to 59, 85 to 88, and Gln-92 each bind AMP; these read GLV and GFPR. Residues 126 to 142 form an LID region; the sequence is NRVAETTARGEQVRADD. Position 127 (Arg-127) interacts with ATP. 2 residues coordinate AMP: Arg-139 and Arg-150. Met-178 contributes to the ATP binding site.

This sequence belongs to the adenylate kinase family. In terms of assembly, monomer.

Its subcellular location is the cytoplasm. The enzyme catalyses AMP + ATP = 2 ADP. Its pathway is purine metabolism; AMP biosynthesis via salvage pathway; AMP from ADP: step 1/1. Catalyzes the reversible transfer of the terminal phosphate group between ATP and AMP. Plays an important role in cellular energy homeostasis and in adenine nucleotide metabolism. This chain is Adenylate kinase, found in Nitrobacter winogradskyi (strain ATCC 25391 / DSM 10237 / CIP 104748 / NCIMB 11846 / Nb-255).